The sequence spans 365 residues: Glycosyltransferase 8 domain-containing protein 1 (365 aa).

Residues 1 to 4 lie on the Cytoplasmic side of the membrane; that stretch reads MTVR. The chain crosses the membrane as a helical; Signal-anchor for type II membrane protein span at residues 5–22; the sequence is RVNVVILVLLVVAFLIVL. Topologically, residues 23 to 365 are lumenal; sequence HRNLLNLNDF…HPIRKHVEEK (343 aa). Residues Asn-102, Asn-181, Asn-245, and Asn-253 are each glycosylated (N-linked (GlcNAc...) asparagine).

This sequence belongs to the glycosyltransferase 8 family.

It localises to the membrane. This chain is Glycosyltransferase 8 domain-containing protein 1 (glt8d1), found in Danio rerio (Zebrafish).